An 89-amino-acid chain; its full sequence is uncharacterized protein (89 aa).

Residues 67 to 86 (VYLSSMYICFILLAIWMTVW) traverse the membrane as a helical segment.

Its subcellular location is the membrane. This is an uncharacterized protein from Bacillus subtilis (strain 168).